We begin with the raw amino-acid sequence, 517 residues long: ATP synthase subunit beta (517 aa).

167–174 (GGAGVGKT) is a binding site for ATP. Composition is skewed to basic and acidic residues over residues 475 to 484 (AESMGAKMDD) and 495 to 508 (DSKD…KADD). Residues 475–517 (AESMGAKMDDGGSDGAPPPSDSKDKGKGDSKADDKGDDADKDA) are disordered.

Belongs to the ATPase alpha/beta chains family. In terms of assembly, F-type ATPases have 2 components, CF(1) - the catalytic core - and CF(0) - the membrane proton channel. CF(1) has five subunits: alpha(3), beta(3), gamma(1), delta(1), epsilon(1). CF(0) has three main subunits: a(1), b(2) and c(9-12). The alpha and beta chains form an alternating ring which encloses part of the gamma chain. CF(1) is attached to CF(0) by a central stalk formed by the gamma and epsilon chains, while a peripheral stalk is formed by the delta and b chains.

It is found in the cell membrane. It catalyses the reaction ATP + H2O + 4 H(+)(in) = ADP + phosphate + 5 H(+)(out). Produces ATP from ADP in the presence of a proton gradient across the membrane. The catalytic sites are hosted primarily by the beta subunits. In Mycobacterium sp. (strain JLS), this protein is ATP synthase subunit beta.